A 1080-amino-acid polypeptide reads, in one-letter code: Carbamoyl phosphate synthase large chain (1080 aa).

The carboxyphosphate synthetic domain stretch occupies residues 1–403 (MPKRTDLETI…SLQKALRGLE (403 aa)). ATP contacts are provided by arginine 129, arginine 169, glycine 175, glycine 176, glutamate 208, valine 210, glutamate 215, glycine 241, valine 242, histidine 243, glutamine 285, and glutamate 299. The ATP-grasp 1 domain maps to 133–328 (RVAMGEIGLD…IAKVAAKLAV (196 aa)). Glutamine 285, glutamate 299, and asparagine 301 together coordinate Mg(2+). Mn(2+) is bound by residues glutamine 285, glutamate 299, and asparagine 301. The oligomerization domain stretch occupies residues 404–554 (TGKIGLDPTG…YSTYEDECEA (151 aa)). Residues 555–942 (LPTDRDKIMI…AFARAQEAGG (388 aa)) are carbamoyl phosphate synthetic domain. The ATP-grasp 2 domain maps to 679-876 (QQLVDKLGLK…LAKIAARCMA (198 aa)). The ATP site is built by arginine 715, arginine 754, leucine 756, glutamate 761, glycine 787, valine 788, histidine 789, serine 790, glutamine 830, and glutamate 847. 3 residues coordinate Mg(2+): glutamine 830, glutamate 847, and asparagine 849. Mn(2+)-binding residues include glutamine 830, glutamate 847, and asparagine 849. The region spanning 943–1080 (IKAPPLGKAF…LQELHKELEA (138 aa)) is the MGS-like domain. The allosteric domain stretch occupies residues 943-1080 (IKAPPLGKAF…LQELHKELEA (138 aa)).

It belongs to the CarB family. Composed of two chains; the small (or glutamine) chain promotes the hydrolysis of glutamine to ammonia, which is used by the large (or ammonia) chain to synthesize carbamoyl phosphate. Tetramer of heterodimers (alpha,beta)4. The cofactor is Mg(2+). It depends on Mn(2+) as a cofactor.

It catalyses the reaction hydrogencarbonate + L-glutamine + 2 ATP + H2O = carbamoyl phosphate + L-glutamate + 2 ADP + phosphate + 2 H(+). The enzyme catalyses hydrogencarbonate + NH4(+) + 2 ATP = carbamoyl phosphate + 2 ADP + phosphate + 2 H(+). The protein operates within amino-acid biosynthesis; L-arginine biosynthesis; carbamoyl phosphate from bicarbonate: step 1/1. Its pathway is pyrimidine metabolism; UMP biosynthesis via de novo pathway; (S)-dihydroorotate from bicarbonate: step 1/3. Large subunit of the glutamine-dependent carbamoyl phosphate synthetase (CPSase). CPSase catalyzes the formation of carbamoyl phosphate from the ammonia moiety of glutamine, carbonate, and phosphate donated by ATP, constituting the first step of 2 biosynthetic pathways, one leading to arginine and/or urea and the other to pyrimidine nucleotides. The large subunit (synthetase) binds the substrates ammonia (free or transferred from glutamine from the small subunit), hydrogencarbonate and ATP and carries out an ATP-coupled ligase reaction, activating hydrogencarbonate by forming carboxy phosphate which reacts with ammonia to form carbamoyl phosphate. This chain is Carbamoyl phosphate synthase large chain, found in Xanthomonas axonopodis pv. citri (strain 306).